The sequence spans 84 residues: Small ribosomal subunit protein uS17 (84 aa).

Belongs to the universal ribosomal protein uS17 family. In terms of assembly, part of the 30S ribosomal subunit.

Functionally, one of the primary rRNA binding proteins, it binds specifically to the 5'-end of 16S ribosomal RNA. This is Small ribosomal subunit protein uS17 from Borreliella afzelii (strain PKo) (Borrelia afzelii).